Here is a 768-residue protein sequence, read N- to C-terminus: Levansucrase (768 aa).

The first 36 residues, 1 to 36, serve as a signal peptide directing secretion; that stretch reads MLENKKHKKMSLSGKSLLMGTLSTAAIVLSASTVNA. 4 stretches are compositionally biased toward polar residues: residues 57-68, 80-99, 106-134, and 143-153; these read SASVNKNDNSGL, TETN…SQVN, SSTQ…QDSD, and NNSQGQSSTSS. The tract at residues 57-158 is disordered; that stretch reads SASVNKNDNS…SSTSSEKTEL (102 aa). Trp250, Asp251, and Ser320 together coordinate sucrose. Asp251 functions as the Nucleophile in the catalytic mechanism. Ca(2+) is bound at residue Asp398. Residues Arg403 and Asp404 each contribute to the sucrose site. Ca(2+)-binding residues include Gln429, Asn468, and Asp502. Residue Glu503 coordinates sucrose. Residue Glu505 is the Proton donor/acceptor of the active site. Arg523 serves as a coordination point for sucrose. Residues 688–736 form a disordered region; it reads HQPVTPNVPTTPEKPENPTTPNTPDTPRTPEVPTTPVKKTTQSELPKAG. The segment covering 691–727 has biased composition (low complexity); it reads VTPNVPTTPEKPENPTTPNTPDTPRTPEVPTTPVKKT. The LPXTG sorting signal motif lies at 732–736; that stretch reads LPKAG. Pentaglycyl murein peptidoglycan amidated alanine is present on Ala735. The propeptide at 736-768 is removed by sortase; the sequence is GAKDGIAATILGAISSMLGVIGLAGISKRKRNN.

Belongs to the glycosyl hydrolase 68 family.

It localises to the secreted. The protein localises to the cell wall. It is found in the cell surface. It catalyses the reaction [6)-beta-D-fructofuranosyl-(2-&gt;](n) alpha-D-glucopyranoside + sucrose = [6)-beta-D-fructofuranosyl-(2-&gt;](n+1) alpha-D-glucopyranoside + D-glucose. With respect to regulation, calcium ions are required for optimal activity, but do not seem to be essential since addition of EDTA causes only a 48% drop in activity. Ca(2+) may play an important structural role and promote stability of levansucrase. Its function is as follows. Fructosyltransferase that catalyzes the polymerization of the fructose moiety of sucrose to produce levan polymer and the fructo-oligosaccharide (FOS) 1-kestose. Is also able to convert raffinose into a fructan polymer and a single oligosaccharide (most likely Gal-Glc-Frc-Frc) in vitro; however, L.gasseri strain DSM 20077 is unable to ferment raffinose. Also displays sucrose hydrolase activity. The chain is Levansucrase from Lactobacillus gasseri.